The sequence spans 538 residues: Syncytin-1 (538 aa).

The first 20 residues, 1–20, serve as a signal peptide directing secretion; the sequence is MALPYHIFLFTVLLPSFTLT. Residues 21–443 lie on the Extracellular side of the membrane; sequence APPPCRCMTS…NIGPWGLFSQ (423 aa). Asn-169 carries an N-linked (GlcNAc...) asparagine glycan. The short motif at 186-189 is the CXXC element; that stretch reads CWMC. 3 disulfide bridges follow: Cys-186/Cys-189, Cys-186/Cys-405, and Cys-397/Cys-404. Asn-208, Asn-214, Asn-234, Asn-242, Asn-245, and Asn-281 each carry an N-linked (GlcNAc...) asparagine glycan. The segment at 320-340 is fusion peptide; it reads ILPFVMAAGVLGALGTGIGGI. An immunosuppression region spans residues 380–396; the sequence is LQNRRALDLLTAERGGT. The CX6CC signature appears at 397–405; the sequence is CLFLGEECC. Asn-409 carries N-linked (GlcNAc...) asparagine glycosylation. The chain crosses the membrane as a helical span at residues 444 to 464; it reads WMPWILPFLGPLAAIILLLLF. Positions 465 to 484 are essential for the fusiogenic function; it reads GPCIFNLLVNFVSSRIEAVK. Residues 465 to 538 lie on the Cytoplasmic side of the membrane; it reads GPCIFNLLVN…LLRPNSAGSS (74 aa). Residues 501–538 form a disordered region; sequence PLDWPASPRSDVNDIKGTPPEEISTAQPLLRPNSAGSS.

The protein belongs to the gamma type-C retroviral envelope protein family. HERV class-I W env subfamily. The mature envelope protein (Env) consists of a trimer of SU-TM heterodimers attached probably by a labile interchain disulfide bond. Interacts with the C-type lectin CD209/DC-SIGN. Specific enzymatic cleavages in vivo yield mature proteins. Envelope glycoproteins are synthesized as an inactive precursor that is heavily N-glycosylated and processed likely by furin in the Golgi to yield the mature SU and TM proteins. The cleavage site between SU and TM requires the minimal sequence [KR]-X-[KR]-R. Post-translationally, the CXXC motif is highly conserved across a broad range of retroviral envelope proteins. It is thought to participate in the formation of a labile disulfide bond possibly with the CX6CC motif present in the transmembrane protein.

It is found in the cell membrane. Its subcellular location is the virion. Functionally, this endogenous retroviral envelope protein has retained its original fusogenic properties and participates in trophoblast fusion and the formation of a syncytium during placenta morphogenesis. May recognize and induce fusion through binding of SLC1A4 and SLC1A5. Its function is as follows. Endogenous envelope proteins may have kept, lost or modified their original function during evolution. Retroviral envelope proteins mediate receptor recognition and membrane fusion during early infection. The surface protein (SU) mediates receptor recognition, while the transmembrane protein (TM) acts as a class I viral fusion protein. The protein may have at least 3 conformational states: pre-fusion native state, pre-hairpin intermediate state, and post-fusion hairpin state. During viral and target cell membrane fusion, the coiled coil regions (heptad repeats) assume a trimer-of-hairpins structure, positioning the fusion peptide in close proximity to the C-terminal region of the ectodomain. The formation of this structure appears to drive apposition and subsequent fusion of membranes. The chain is Syncytin-1 (ERVW-1) from Pongo pygmaeus (Bornean orangutan).